Reading from the N-terminus, the 212-residue chain is GTP-binding nuclear protein Ran (212 aa).

Residues 3-167 form the Small GTPase Ran-type domain; that stretch reads EKEQIKLVLV…VWLTSKLLGN (165 aa). 14–21 contributes to the GTP binding site; that stretch reads DGGVGKTT. Positions 33 to 41 are switch-I; that stretch reads PRYIPTLGV. GTP is bound by residues Gly64, 118–121, and 146–148; these read NKVD and SAK. Positions 64 to 80 are switch-II; that stretch reads GQEKFGGLRDGYYIQGN.

Belongs to the small GTPase superfamily. Ran family. Found in a nuclear export complex with RanGTP, exportin and pre-miRNA.

It localises to the nucleus. Its function is as follows. GTP-binding protein involved in nucleocytoplasmic transport. Required for the import of protein into the nucleus and also for RNA export. Involved in chromatin condensation and control of cell cycle. The sequence is that of GTP-binding nuclear protein Ran (ranA) from Dictyostelium discoideum (Social amoeba).